A 362-amino-acid polypeptide reads, in one-letter code: Shewanella-like protein phosphatase 1 (362 aa).

Positions 1 to 23 (MIFKKALYILLFLYIAIVKKGES) are cleaved as a signal peptide. Mn(2+)-binding residues include Asp-65, His-67, Asp-101, and Asn-136. His-137 acts as the Proton donor in catalysis. Residue His-196 coordinates Mn(2+).

This sequence belongs to the metallophosphoesterase superfamily. SLP family. Mn(2+) serves as cofactor.

Phosphatase which plays an essential role in the development and differentiation of the ookinete and in the formation of ookinete micronemes. This Plasmodium berghei (strain Anka) protein is Shewanella-like protein phosphatase 1.